Consider the following 259-residue polypeptide: BTB/POZ domain-containing protein KCTD4 (259 aa).

The interval 1-22 (MEHKINRREKEKDYEGKHNSLE) is disordered. The 102-residue stretch at 33–134 (TLMTLNVGGY…EVKSRWEKEQ (102 aa)) folds into the BTB domain.

This is BTB/POZ domain-containing protein KCTD4 (KCTD4) from Bos taurus (Bovine).